Here is a 407-residue protein sequence, read N- to C-terminus: Zinc finger protein 174 (407 aa).

The interval 1–20 (MAAKMEITLSSNTEASSKQE) is disordered. Residue K26 forms a Glycyl lysine isopeptide (Lys-Gly) (interchain with G-Cter in SUMO2) linkage. Residues 59–124 (GPQEALSQLR…KEIVTLVEDF (66 aa)) enclose the SCAN box domain. The interval 150–270 (GSQLGEQELP…RRQVSSPNAQ (121 aa)) is disordered. K204 participates in a covalent cross-link: Glycyl lysine isopeptide (Lys-Gly) (interchain with G-Cter in SUMO2). A compositionally biased stretch (basic and acidic residues) spans 211–221 (PRMRSDNKENP). Residues K230 and K271 each participate in a glycyl lysine isopeptide (Lys-Gly) (interchain with G-Cter in SUMO2) cross-link. C2H2-type zinc fingers lie at residues 326 to 348 (YKCD…KRVH), 354 to 376 (YTCG…QRIH), and 382 to 405 (YQCG…RLHH).

Belongs to the krueppel C2H2-type zinc-finger protein family. In terms of assembly, homodimer. In terms of tissue distribution, expressed in a variety of organs, but most strongly in adult testis and ovary followed by small intestine, colon, prostate, thymus, spleen, pancreas, skeletal muscle, heart, brain and kidney. Also expressed in umbilical vein endothelial cells, foreskin fibroblast and Hep-G2 cells.

Its subcellular location is the nucleus. Functionally, transcriptional repressor. This Homo sapiens (Human) protein is Zinc finger protein 174 (ZNF174).